A 62-amino-acid polypeptide reads, in one-letter code: UPF0337 protein XCC0070 (62 aa).

The tract at residues 32–62 (LEGAAEKNIGKVQRKAGELADDVRDATKSTR) is disordered.

It belongs to the UPF0337 (CsbD) family.

The protein is UPF0337 protein XCC0070 of Xanthomonas campestris pv. campestris (strain ATCC 33913 / DSM 3586 / NCPPB 528 / LMG 568 / P 25).